Reading from the N-terminus, the 212-residue chain is Ribonuclease HII (212 aa).

The RNase H type-2 domain occupies 18–212 (GCVFGVDEAG…APVAQQELFR (195 aa)). Residues Asp-24, Glu-25, and Asp-118 each coordinate a divalent metal cation.

The protein belongs to the RNase HII family. Mn(2+) is required as a cofactor. Requires Mg(2+) as cofactor.

It localises to the cytoplasm. The enzyme catalyses Endonucleolytic cleavage to 5'-phosphomonoester.. In terms of biological role, endonuclease that specifically degrades the RNA of RNA-DNA hybrids. This chain is Ribonuclease HII, found in Erythrobacter litoralis (strain HTCC2594).